The sequence spans 266 residues: Small ribosomal subunit protein uS2 (266 aa).

Residues 233–266 (AVREEEFASAPDAGKKGRQAQPKKGKRASDAAAE) form a disordered region. Basic residues predominate over residues 248 to 258 (KGRQAQPKKGK).

This sequence belongs to the universal ribosomal protein uS2 family.

This chain is Small ribosomal subunit protein uS2, found in Xylella fastidiosa (strain M23).